Here is a 250-residue protein sequence, read N- to C-terminus: Electron transport regulator A (250 aa).

Positions 164-237 (KNAEERLAAF…GKYIIIVDHH (74 aa)) constitute an HTH crp-type domain. Residues 197-216 (RGDIGNYLGLTVETISRLLG) constitute a DNA-binding region (H-T-H motif).

Monomer.

In terms of biological role, regulates anaerobic growth on fumarate, nitrite, Fe(3+), TMAO, DMSO, thiosulfate and sulfite, but not on nitrate nor Mn(4+). The protein is Electron transport regulator A (etrA) of Shewanella oneidensis (strain ATCC 700550 / JCM 31522 / CIP 106686 / LMG 19005 / NCIMB 14063 / MR-1).